The following is a 198-amino-acid chain: MYEYIKGEYMGINKDYIIIENNGIGYKIFTSGATMSSMPCCGEKIKLYIEQIVREDFIGLYGFESLEELEMFKMLLSINGVGAKAALSLLSISRLNNLKYAIITGDEKHLCRGVGIGKKTAARIILELKDKLKTDELLNCIDEFDDVTQDNSLAVSEALSALISLGYTEKEAEKVLRDVDKSESVENIIKSALVKLMG.

Residues Met-1–Glu-64 form a domain I region. A domain II region spans residues Ser-65–Glu-143. The interval Phe-144 to Ala-154 is flexible linker. The domain III stretch occupies residues Ala-154–Gly-198.

The protein belongs to the RuvA family. Homotetramer. Forms an RuvA(8)-RuvB(12)-Holliday junction (HJ) complex. HJ DNA is sandwiched between 2 RuvA tetramers; dsDNA enters through RuvA and exits via RuvB. An RuvB hexamer assembles on each DNA strand where it exits the tetramer. Each RuvB hexamer is contacted by two RuvA subunits (via domain III) on 2 adjacent RuvB subunits; this complex drives branch migration. In the full resolvosome a probable DNA-RuvA(4)-RuvB(12)-RuvC(2) complex forms which resolves the HJ.

It is found in the cytoplasm. The RuvA-RuvB-RuvC complex processes Holliday junction (HJ) DNA during genetic recombination and DNA repair, while the RuvA-RuvB complex plays an important role in the rescue of blocked DNA replication forks via replication fork reversal (RFR). RuvA specifically binds to HJ cruciform DNA, conferring on it an open structure. The RuvB hexamer acts as an ATP-dependent pump, pulling dsDNA into and through the RuvAB complex. HJ branch migration allows RuvC to scan DNA until it finds its consensus sequence, where it cleaves and resolves the cruciform DNA. In Clostridium botulinum (strain Eklund 17B / Type B), this protein is Holliday junction branch migration complex subunit RuvA.